The sequence spans 151 residues: Multiprotein-bridging factor 1 (151 aa).

Disordered stretches follow at residues 1-29 (MSDW…ARSQ) and 78-98 (DPNV…SQKD). Residues 41 to 119 (VVSVDKKYGS…VNDYEAARAI (79 aa)) are essential for TBP-binding. In terms of domain architecture, HTH cro/C1-type spans 85–139 (ISRARTDKKMSQKDLATKINEKPTVVNDYEAARAIPNQQVLSKLERALGVKLRGN). The segment covering 88 to 98 (ARTDKKMSQKD) has biased composition (basic and acidic residues). A DNA-binding region (H-T-H motif) is located at residues 96-115 (QKDLATKINEKPTVVNDYEA). A Phosphoserine modification is found at Ser143.

It belongs to the MBF1 family. As to quaternary structure, interacts with TBP and the transcription factor GCN4. Interacts with RPS3/us3.

The protein localises to the cytoplasm. Its subcellular location is the nucleus. Its function is as follows. Transcriptional coactivator that stimulates GCN4-dependent transcriptional activity by bridging the DNA-binding region of GCN4 and TBP (SPT15), thereby recruiting TBP to GCN4-bound promoters. Involved in induction of the ribosome quality control (RQC) pathway; a pathway that degrades nascent peptide chains during problematic translation. Required to prevent stalled ribosomes from frameshifting. The polypeptide is Multiprotein-bridging factor 1 (MBF1) (Saccharomyces cerevisiae (strain ATCC 204508 / S288c) (Baker's yeast)).